A 415-amino-acid polypeptide reads, in one-letter code: ATP-dependent RNA helicase RhlB (415 aa).

The short motif at 9 to 37 (QRFSALPLHPIVRGALAKKGFDFCTPIQA) is the Q motif element. Positions 40–218 (LPISLNGRDV…FEDMNEPEYI (179 aa)) constitute a Helicase ATP-binding domain. ATP is bound at residue 53–60 (AQTGTGKT). The DEAD box signature appears at 164-167 (DEAD). A Helicase C-terminal domain is found at 241–389 (DKMALLLTLM…VSQYETEALL (149 aa)).

Belongs to the DEAD box helicase family. RhlB subfamily. In terms of assembly, component of the RNA degradosome, which is a multiprotein complex involved in RNA processing and mRNA degradation.

It is found in the cytoplasm. The catalysed reaction is ATP + H2O = ADP + phosphate + H(+). DEAD-box RNA helicase involved in RNA degradation. Has RNA-dependent ATPase activity and unwinds double-stranded RNA. In Haemophilus influenzae (strain ATCC 51907 / DSM 11121 / KW20 / Rd), this protein is ATP-dependent RNA helicase RhlB.